The sequence spans 712 residues: Polyribonucleotide nucleotidyltransferase (712 aa).

2 residues coordinate Mg(2+): D488 and D494. Residues 555–614 (PKIETINIPTDKIREVIGSGGKVIREIVATTGAKVDINDDGVVKVSASDGAKIKAAIDWI) form the KH domain. The S1 motif domain maps to 624–692 (GKIYDGKVVK…DRGKTKLSMK (69 aa)).

This sequence belongs to the polyribonucleotide nucleotidyltransferase family. Requires Mg(2+) as cofactor.

The protein localises to the cytoplasm. It catalyses the reaction RNA(n+1) + phosphate = RNA(n) + a ribonucleoside 5'-diphosphate. Functionally, involved in mRNA degradation. Catalyzes the phosphorolysis of single-stranded polyribonucleotides processively in the 3'- to 5'-direction. This Caulobacter vibrioides (strain NA1000 / CB15N) (Caulobacter crescentus) protein is Polyribonucleotide nucleotidyltransferase.